An 892-amino-acid polypeptide reads, in one-letter code: Protein RRP6-like 3 (892 aa).

One can recognise a 3'-5' exonuclease domain in the interval tyrosine 119 to lysine 287. An HRDC domain is found at serine 350 to methionine 436. The disordered stretch occupies residues valine 785–leucine 811.

Its subcellular location is the cytoplasm. It is found in the cytosol. This is Protein RRP6-like 3 from Arabidopsis thaliana (Mouse-ear cress).